Here is a 338-residue protein sequence, read N- to C-terminus: Heat-inducible transcription repressor HrcA (338 aa).

This sequence belongs to the HrcA family.

Its function is as follows. Negative regulator of class I heat shock genes (grpE-dnaK-dnaJ and groELS operons). Prevents heat-shock induction of these operons. The polypeptide is Heat-inducible transcription repressor HrcA (Polaromonas sp. (strain JS666 / ATCC BAA-500)).